The following is a 185-amino-acid chain: Peptidyl-tRNA hydrolase (185 aa).

Residue Tyr14 participates in tRNA binding. The active-site Proton acceptor is the His19. Residues Phe64, Asn66, and Asn112 each contribute to the tRNA site.

This sequence belongs to the PTH family. As to quaternary structure, monomer.

Its subcellular location is the cytoplasm. It carries out the reaction an N-acyl-L-alpha-aminoacyl-tRNA + H2O = an N-acyl-L-amino acid + a tRNA + H(+). Hydrolyzes ribosome-free peptidyl-tRNAs (with 1 or more amino acids incorporated), which drop off the ribosome during protein synthesis, or as a result of ribosome stalling. Its function is as follows. Catalyzes the release of premature peptidyl moieties from peptidyl-tRNA molecules trapped in stalled 50S ribosomal subunits, and thus maintains levels of free tRNAs and 50S ribosomes. The protein is Peptidyl-tRNA hydrolase of Alkaliphilus oremlandii (strain OhILAs) (Clostridium oremlandii (strain OhILAs)).